The chain runs to 301 residues: Small ribosomal subunit biogenesis GTPase RsgA (301 aa).

The CP-type G domain maps to 63–224; the sequence is INALVRPPIA…IADTPGFSSY (162 aa). Residues 112–115 and 167–175 contribute to the GTP site; these read SKAD and GQTGAGKST. Residues C248, C253, H255, and C261 each coordinate Zn(2+).

Belongs to the TRAFAC class YlqF/YawG GTPase family. RsgA subfamily. In terms of assembly, monomer. Associates with 30S ribosomal subunit, binds 16S rRNA. Zn(2+) is required as a cofactor.

The protein resides in the cytoplasm. Its function is as follows. One of several proteins that assist in the late maturation steps of the functional core of the 30S ribosomal subunit. Helps release RbfA from mature subunits. May play a role in the assembly of ribosomal proteins into the subunit. Circularly permuted GTPase that catalyzes slow GTP hydrolysis, GTPase activity is stimulated by the 30S ribosomal subunit. This chain is Small ribosomal subunit biogenesis GTPase RsgA, found in Leuconostoc citreum (strain KM20).